The following is a 141-amino-acid chain: Small ribosomal subunit protein uS19 (141 aa).

This sequence belongs to the universal ribosomal protein uS19 family.

Functionally, protein S19 forms a complex with S13 that binds strongly to the 16S ribosomal RNA. The protein is Small ribosomal subunit protein uS19 of Thermofilum pendens (strain DSM 2475 / Hrk 5).